A 111-amino-acid chain; its full sequence is Nucleoid-associated protein CYA_1369 (111 aa).

Belongs to the YbaB/EbfC family. Homodimer.

It localises to the cytoplasm. The protein resides in the nucleoid. In terms of biological role, binds to DNA and alters its conformation. May be involved in regulation of gene expression, nucleoid organization and DNA protection. This chain is Nucleoid-associated protein CYA_1369, found in Synechococcus sp. (strain JA-3-3Ab) (Cyanobacteria bacterium Yellowstone A-Prime).